We begin with the raw amino-acid sequence, 1010 residues long: MGSRLKQNPDTTFEVYIEVNRPGSTDEDPELQRIFPEDFSDQEVLQTVTKFCFPFSLDSLTSSHVGQNFTFVLTDIDSKQRFGFCRLSSGAKSCFCILSYLPWFEAFYKLLNILAEYSSKNQDSQRNELLKTLHGHPIPEPGTPMHLSVHSHFTVPDSQELPSIPENRNLTEYFVAVDVNNMLHLYASMLYERRILICCSKLSTLTACIHGSSAMLFPMYWQHVYIPVLPPHLLDYCCAPMPYLIGIHSSLMEKVKGMSLDDVVFLNVDTNTLETPFDDLQNLPNEVVSALKNRIRKMSTTTGDGVARAFLKAQASLFGSYRNALKIEPEEPITFCEETFVSHRSSGLRPFLQNAIQLQLFKQFIDGRLDLLNSGNGFSDVFEEEINMGEYAGSDKLYHQWLSTVKKGSGAFINTMKTRANPAMKTVYKFAKDHAKMGIKEVKNRLKQKDMAENGFSTATEEPLPQISPSSIEKKRGEERRPITVHFGQVRPPRPHVPRRPKSNAVVESRTTAGSSPDQPQQYRTLKESDADGDEAISPEKDSSEATVKEPQSTEVKHVSLLEDIFSNLQTEPPLLSQAKSLEDLRTPKEDHENQFTFDYQRMDLTAQERTRTIPAMKHGHPYNKLWSMGHDDMAIPNKYLQISPERHLTLPSNSTVTPHKDSALTNIEKEVTIASSQGNITIPRPHGRKTPELGIVPPPPAPRGIKLQTAMTDANKQQTGDSSNYHGQITEGSLRELSADNGEKETAGSSTSEILKPVKVSTEVGMNDDDLLSLLDPLKAGRYQTASQPPMGTLPHSFETPCCSSTPLLTSLQSDFVSPAFSHQLGFAPQPAFLHSPLNPFAQALAAEKTASVMGPPMGVFKAPVATALGSHSFLPTPGIYHSPRPLTSALQGSNLFGQISSGTPLNPVIRQSHSLSETQSNMPLMTSIPAGHRTLPMVQSRSKHQDGKPREYPPIPPRPAKLLEPALLPTKSDQPIDPFEDLLNKTKQTVTPASGKVEHLRKQWETFE.

Positions 13-143 (FEVYIEVNRP…HGHPIPEPGT (131 aa)) constitute a uDENN domain. Positions 160–296 (ELPSIPENRN…VVSALKNRIR (137 aa)) constitute a cDENN domain. The region spanning 298 to 375 (MSTTTGDGVA…DGRLDLLNSG (78 aa)) is the dDENN domain. Residues 378–382 (FSDVF) carry the FXDXF motif motif. A disordered region spans residues 455-554 (GFSTATEEPL…EATVKEPQST (100 aa)). A compositionally biased stretch (basic and acidic residues) spans 472-482 (IEKKRGEERRP). The span at 493–502 (PRPHVPRRPK) shows a compositional bias: basic residues. Over residues 509–524 (SRTTAGSSPDQPQQYR) the composition is skewed to polar residues. Over residues 538–548 (SPEKDSSEATV) the composition is skewed to basic and acidic residues. A Clathrin box motif is present at residues 560 to 569 (SLLEDIFSNL).

Its subcellular location is the cytoplasmic vesicle. The protein resides in the clathrin-coated vesicle membrane. It is found in the presynaptic cell membrane. Functionally, guanine nucleotide exchange factor (GEF) regulating clathrin-mediated endocytosis through RAB35 activation. Promotes the exchange of GDP to GTP, converting inactive GDP-bound RAB35 into its active GTP-bound form. Regulates clathrin-mediated endocytosis of synaptic vesicles and mediates exit from early endosomes. Binds phosphatidylinositol-phosphates (PtdInsPs), with some preference for PtdIns(3)P. The protein is DENN domain-containing protein 1A (dennd1a) of Xenopus laevis (African clawed frog).